The chain runs to 255 residues: F-box/SPRY domain-containing protein 1 (255 aa).

An F-box domain is found at 3 to 51 (DPVAALCNYNVLEVIFSYLELEDLNHCSQVCKSWYHFLNDENSDVWRWH). Residues 61 to 253 (LKSDLLASVS…VSMVYLGTPL (193 aa)) enclose the B30.2/SPRY domain.

This sequence belongs to the FBXO45/Fsn family. Component of an E3 ubiquitin ligase complex composed of hiw and Fsn.

The protein localises to the synapse. It participates in protein modification; protein ubiquitination. Functionally, required in the presynaptic motoneuron to down-regulate the levels of wnd and restrain synaptic terminal growth at the neuromuscular junction (NMJ). This is F-box/SPRY domain-containing protein 1 from Drosophila yakuba (Fruit fly).